The following is a 313-amino-acid chain: Ornithine carbamoyltransferase (313 aa).

Residues 57 to 60 (STRT), Q84, R108, and 135 to 138 (HPCQ) each bind carbamoyl phosphate. L-ornithine-binding positions include N166, D230, and 234–235 (SM). Residues 270 to 271 (CL) and R298 each bind carbamoyl phosphate.

The protein belongs to the aspartate/ornithine carbamoyltransferase superfamily. OTCase family. Homohexamer.

The protein resides in the cytoplasm. The catalysed reaction is carbamoyl phosphate + L-ornithine = L-citrulline + phosphate + H(+). Its pathway is amino-acid biosynthesis; L-arginine biosynthesis; L-arginine from L-ornithine and carbamoyl phosphate: step 1/3. Its function is as follows. Reversibly catalyzes the transfer of the carbamoyl group from carbamoyl phosphate (CP) to the N(epsilon) atom of ornithine (ORN) to produce L-citrulline. The protein is Ornithine carbamoyltransferase of Gloeobacter violaceus (strain ATCC 29082 / PCC 7421).